A 239-amino-acid chain; its full sequence is MDGFSILHEPPAAYKEVKWMADTFVAGMGLGWIVNYALMIRFSWKGRPHCMALLPLCNNIAWELTYTIVYPSANRVELLVFAIGLTLNFFIMVGARRSARVEWRHSPLLSEHAGFILLVGTLLCFTGHVALAMEIGPGLAYSWGAVVCQLALSIGGLFQLLQRNSTAGTSWTLWSSRFLGSCCTVAFAGLRCKYWPEVFGWLASPLVLWSLVTFLLADSAYGFCLYRVSHAETKARKKH.

The next 5 helical transmembrane spans lie at 20 to 40 (MADT…ALMI), 50 to 70 (CMAL…TIVY), 75 to 95 (RVEL…MVGA), 113 to 133 (AGFI…ALAM), and 138 to 158 (GLAY…GGLF). The N-linked (GlcNAc...) asparagine glycan is linked to asparagine 164. Residues 197 to 217 (EVFGWLASPLVLWSLVTFLLA) traverse the membrane as a helical segment.

Belongs to the paxB family.

Its subcellular location is the membrane. The protein operates within secondary metabolite biosynthesis. In terms of biological role, terpene cyclase; part of the gene cluster that mediates the biosynthesis of paspalitrems, indole-diterpene (IDT) mycotoxins that are potent tremorgens in mammals. The geranylgeranyl diphosphate (GGPP) synthase idtG is proposed to catalyze the first step in IDT biosynthesis via catalysis of a series of iterative condensations of isopentenyl diphosphate (IPP) with dimethylallyl diphosphate (DMAPP), geranyl diphosphate (GPP), and farnesyl diphosphate (FPP), to form GGPP. Condensation of indole-3-glycerol phosphate with GGPP by the prenyltransferase idtC then forms 3-geranylgeranylindole (3-GGI). Epoxidation of the two terminal alkenes of the geranylgeranyl moiety by the FAD-dependent monooxygenase idtM, and cyclization by the terpene cyclase idtB then leads to the production of paspaline. The cytochrome P450 monooxygenase idtP then catalyzes oxidative elimination of the pendant methyl group at C-12 of paspaline and generates the C-10 ketone to yield 13-desoxypaxilline. The cytochrome P450 monooxygenase idtQ may catalyze the C-13 oxidation of 13-desoxypaxilline to afford paxilline. Considering that both paspalicine and paxilline were detected in C.paspali, idtQ also catalyzes the formation of paspalinine from 13-desoxypaxilline via paspalicine as an intermediate. Finally, the alpha-prenyltransferase idtF prenylates paspalinine at the C-20 or the C-21 positions to yield paspalitrems A and C, respectively. The hydroxylation of paspalitrem A at C-32 by a still unknown oxidase affords paspalitrem B. The protein is Terpene cyclase idtB of Claviceps paspali (Rye ergot fungus).